Here is a 123-residue protein sequence, read N- to C-terminus: Small ribosomal subunit protein uS13 (123 aa).

Residues Thr103–Lys123 form a disordered region. Residues Thr105–Lys123 are compositionally biased toward basic residues.

This sequence belongs to the universal ribosomal protein uS13 family. Part of the 30S ribosomal subunit. Forms a loose heterodimer with protein S19. Forms two bridges to the 50S subunit in the 70S ribosome.

Located at the top of the head of the 30S subunit, it contacts several helices of the 16S rRNA. In the 70S ribosome it contacts the 23S rRNA (bridge B1a) and protein L5 of the 50S subunit (bridge B1b), connecting the 2 subunits; these bridges are implicated in subunit movement. Contacts the tRNAs in the A and P-sites. The polypeptide is Small ribosomal subunit protein uS13 (Desulforudis audaxviator (strain MP104C)).